We begin with the raw amino-acid sequence, 107 residues long: U1-lycotoxin-Ls1x (107 aa).

The signal sequence occupies residues 1–20; that stretch reads MMKVLVVVALLVTLISYSSS. The propeptide occupies 21-41; the sequence is EGIDDLEADELLSLMANEHPR. Disulfide bonds link cysteine 44–cysteine 59, cysteine 51–cysteine 68, cysteine 58–cysteine 86, and cysteine 70–cysteine 84.

It belongs to the neurotoxin 19 (CSTX) family. 04 (U1-Lctx) subfamily. Expressed by the venom gland.

The protein resides in the secreted. The protein is U1-lycotoxin-Ls1x of Lycosa singoriensis (Wolf spider).